The primary structure comprises 194 residues: MTNHEQDQQDNSELLDDDQVTLESQQAADSGAEAPASDDVAALQAEIARLNEELQTTKENALRAAAEAQNARRRAEQDVEKAHKFGLEKFVGDILPVADNLERAIDAAKAEGADLGVVVEGVELTLKTLVDGLKRHKVEQIDPQGEPFDPQLHQAMTMIEQPDVEPNTVINVFQRGYTLHGRLVRPAMVVVSKA.

The tract at residues 1–39 is disordered; it reads MTNHEQDQQDNSELLDDDQVTLESQQAADSGAEAPASDD. The segment covering 8 to 20 has biased composition (acidic residues); it reads QQDNSELLDDDQV.

The protein belongs to the GrpE family. As to quaternary structure, homodimer.

Its subcellular location is the cytoplasm. Functionally, participates actively in the response to hyperosmotic and heat shock by preventing the aggregation of stress-denatured proteins, in association with DnaK and GrpE. It is the nucleotide exchange factor for DnaK and may function as a thermosensor. Unfolded proteins bind initially to DnaJ; upon interaction with the DnaJ-bound protein, DnaK hydrolyzes its bound ATP, resulting in the formation of a stable complex. GrpE releases ADP from DnaK; ATP binding to DnaK triggers the release of the substrate protein, thus completing the reaction cycle. Several rounds of ATP-dependent interactions between DnaJ, DnaK and GrpE are required for fully efficient folding. This is Protein GrpE from Saccharophagus degradans (strain 2-40 / ATCC 43961 / DSM 17024).